Reading from the N-terminus, the 1274-residue chain is DENN domain-containing protein 3 (1274 aa).

The tract at residues 65–108 (GQVPGASCALGKGRRRSFRKKREKPRMEPWKSHPGDSKGPDSED) is disordered. The 171-residue stretch at 75–245 (GKGRRRSFRK…LIPSPPPGPL (171 aa)) folds into the uDENN domain. Positions 76–88 (KGRRRSFRKKREK) are enriched in basic residues. Residues 89 to 105 (PRMEPWKSHPGDSKGPD) are compositionally biased toward basic and acidic residues. The region spanning 268–400 (IVDLDLHLPL…PLLLAQTFIQ (133 aa)) is the cDENN domain. The 105-residue stretch at 402–506 (VQSLQLHPDL…KARLNGRMDA (105 aa)) folds into the dDENN domain. The interval 520–970 (RIDRMLISPR…KHKINPSAGE (451 aa)) is linker. Phosphoserine; by ULK1 occurs at positions 554 and 572. Y940 carries the phosphotyrosine modification. 7 WD repeats span residues 975 to 1013 (AIEVLLYTPGRLDPAEKVEDAHPKLWCALNEGKVVVFDA), 1019 to 1055 (HQHCFKVGSSKVNCMVMAEHNQVWVGSEDSVIYIINV), 1059 to 1099 (SCNK…AWNV), 1103 to 1140 (RVISRFQLSYGDLLSISLHNDRIWCCTVHKILVVTPQG), 1146 to 1181 (LKHPKDASFLAFQLLPEEQQLWAASTGVSELYMWSL), 1186 to 1228 (QPPQ…IYVM), and 1234 to 1273 (TVEKELVAHLDTVRTLCSAEDRYVLSGAGQEEGKIAIWKV).

In terms of assembly, forms oligomers. Interacts with 6 of the 7 known isoforms of 14-3-3 proteins.

Its subcellular location is the cytoplasm. Functionally, guanine nucleotide exchange factor (GEF) activating Rab12. Promotes the exchange of GDP to GTP, converting inactive GDP-bound Rab12 into its active GTP-bound form. Regulates autophagy in response to starvation through Rab12 activation. Starvation leads to ULK1/2-dependent phosphorylation of Ser-554 and Ser-572, which in turn allows recruitment of 14-3-3 adapter proteins and leads to up-regulation of GEF activity towards Rab12. Also plays a role in protein transport from recycling endosomes to lysosomes, regulating, for instance, the degradation of the transferrin receptor and of the amino acid transporter PAT4. Starvation also induces phosphorylation at Tyr-940, which leads to up-regulated GEF activity and initiates autophagy. The sequence is that of DENN domain-containing protein 3 (Dennd3) from Mus musculus (Mouse).